Here is a 999-residue protein sequence, read N- to C-terminus: Hypoxia up-regulated protein 1 (999 aa).

Residues 1–32 (MAATVRRQRPRRLLCWALVAVLLADLLALSDT) form the signal peptide. 3 N-linked (GlcNAc...) asparagine glycosylation sites follow: asparagine 155, asparagine 222, and asparagine 515. Serine 567 carries the post-translational modification Phosphoserine. The disordered stretch occupies residues 567–694 (SPEEESTLTK…KKPKPARKQK (128 aa)). Residues 574-583 (LTKLGNTISS) are compositionally biased toward polar residues. Residue asparagine 596 is glycosylated (N-linked (GlcNAc...) asparagine). 2 stretches are compositionally biased toward basic and acidic residues: residues 611–626 (GSKDEPAEQGELKEEA) and 641–668 (PKGDAAREGEKPDEKESGDKPEAQKPNE). Over residues 669–680 (KGQAGPEGAAPA) the composition is skewed to low complexity. 3 N-linked (GlcNAc...) asparagine glycosylation sites follow: asparagine 830, asparagine 862, and asparagine 869. Lysine 883 is subject to N6-acetyllysine. A disordered region spans residues 909–999 (AKFTKPRPRP…QKRPSKNDEL (91 aa)). N-linked (GlcNAc...) asparagine glycosylation is found at asparagine 922 and asparagine 931. The span at 949 to 962 (EEAKPILEPDKEET) shows a compositional bias: basic and acidic residues. Residues 996–999 (NDEL) carry the Prevents secretion from ER motif.

It belongs to the heat shock protein 70 family. Part of a large chaperone multiprotein complex comprising DNAJB11, HSP90B1, HSPA5, HYOU, PDIA2, PDIA4, PDIA6, PPIB, SDF2L1, UGGT1 and very small amounts of ERP29, but not, or at very low levels, CALR nor CANX.

It localises to the endoplasmic reticulum lumen. Its function is as follows. Has a pivotal role in cytoprotective cellular mechanisms triggered by oxygen deprivation. Promotes HSPA5/BiP-mediated ATP nucleotide exchange and thereby activates the unfolded protein response (UPR) pathway in the presence of endoplasmic reticulum stress. May play a role as a molecular chaperone and participate in protein folding. The chain is Hypoxia up-regulated protein 1 (Hyou1) from Mus musculus (Mouse).